We begin with the raw amino-acid sequence, 494 residues long: Glycerol kinase (494 aa).

Thr13 contacts ADP. ATP-binding residues include Thr13, Thr14, and Ser15. Position 13 (Thr13) interacts with sn-glycerol 3-phosphate. An ADP-binding site is contributed by Arg17. Sn-glycerol 3-phosphate contacts are provided by Arg83, Glu84, Tyr135, and Asp244. Glycerol is bound by residues Arg83, Glu84, Tyr135, Asp244, and Gln245. ADP-binding residues include Thr266 and Gly309. Thr266, Gly309, Gln313, and Gly410 together coordinate ATP. ADP is bound by residues Gly410 and Asn414.

Belongs to the FGGY kinase family.

It catalyses the reaction glycerol + ATP = sn-glycerol 3-phosphate + ADP + H(+). It participates in polyol metabolism; glycerol degradation via glycerol kinase pathway; sn-glycerol 3-phosphate from glycerol: step 1/1. Its activity is regulated as follows. Inhibited by fructose 1,6-bisphosphate (FBP). In terms of biological role, key enzyme in the regulation of glycerol uptake and metabolism. Catalyzes the phosphorylation of glycerol to yield sn-glycerol 3-phosphate. This Shewanella sp. (strain MR-4) protein is Glycerol kinase.